Here is a 201-residue protein sequence, read N- to C-terminus: MAPLVGVVALQGGFAEHIEVLESLGANTRRVRRSADLQGLDGIVLPGGESTVIDKLMRSFSLAEPLKDAVRRGLPVLATCAGLVVLATDLEDAAKGQHTLSLLDVTVRRNAFGSQLDSFEGTLDIDGVGDGVSATFIRAPVITRVGPGVEVIAQLPDEAGNVSGAIVGVRQRNVLALSFHPEETDDDRVHRTWLRQVSEEV.

48 to 50 (GES) contacts L-glutamine. C80 acts as the Nucleophile in catalysis. L-glutamine is bound by residues R109 and 137 to 138 (IR). Active-site charge relay system residues include H180 and E182.

The protein belongs to the glutaminase PdxT/SNO family. In terms of assembly, in the presence of PdxS, forms a dodecamer of heterodimers. Only shows activity in the heterodimer.

It carries out the reaction aldehydo-D-ribose 5-phosphate + D-glyceraldehyde 3-phosphate + L-glutamine = pyridoxal 5'-phosphate + L-glutamate + phosphate + 3 H2O + H(+). The enzyme catalyses L-glutamine + H2O = L-glutamate + NH4(+). It participates in cofactor biosynthesis; pyridoxal 5'-phosphate biosynthesis. In terms of biological role, catalyzes the hydrolysis of glutamine to glutamate and ammonia as part of the biosynthesis of pyridoxal 5'-phosphate. The resulting ammonia molecule is channeled to the active site of PdxS. The polypeptide is Pyridoxal 5'-phosphate synthase subunit PdxT (Cutibacterium acnes (strain DSM 16379 / KPA171202) (Propionibacterium acnes)).